Here is a 453-residue protein sequence, read N- to C-terminus: Retroviral integration site protein Fli-1 homolog (453 aa).

The PNT domain occupies 111–197; sequence PPPPNMTTNE…SHLNYLRDSS (87 aa). Polar residues predominate over residues 201-214; the sequence is GYNTQAHTDQSSRL. The disordered stretch occupies residues 201–273; that stretch reads GYNTQAHTDQ…YQILGPTSSR (73 aa). Positions 215-226 are enriched in basic and acidic residues; the sequence is TAKEDPSYEAVR. Polar residues-rich tracts occupy residues 230–239 and 246–273; these read WGNSMSSPVT and GTQN…TSSR. The segment at residues 282-362 is a DNA-binding region (ETS); sequence IQLWQFLLEL…HGKRYAYKFD (81 aa).

It belongs to the ETS family.

Its subcellular location is the nucleus. This chain is Retroviral integration site protein Fli-1 homolog (fli1), found in Xenopus laevis (African clawed frog).